A 457-amino-acid polypeptide reads, in one-letter code: Argininosuccinate lyase (457 aa).

Belongs to the lyase 1 family. Argininosuccinate lyase subfamily.

Its subcellular location is the cytoplasm. The enzyme catalyses 2-(N(omega)-L-arginino)succinate = fumarate + L-arginine. It functions in the pathway amino-acid biosynthesis; L-arginine biosynthesis; L-arginine from L-ornithine and carbamoyl phosphate: step 3/3. The chain is Argininosuccinate lyase from Salmonella arizonae (strain ATCC BAA-731 / CDC346-86 / RSK2980).